The chain runs to 127 residues: ATP synthase epsilon chain (127 aa).

The protein belongs to the ATPase epsilon chain family. As to quaternary structure, F-type ATPases have 2 components, CF(1) - the catalytic core - and CF(0) - the membrane proton channel. CF(1) has five subunits: alpha(3), beta(3), gamma(1), delta(1), epsilon(1). CF(0) has three main subunits: a, b and c.

The protein localises to the cell inner membrane. Produces ATP from ADP in the presence of a proton gradient across the membrane. The polypeptide is ATP synthase epsilon chain (Leptospira borgpetersenii serovar Hardjo-bovis (strain JB197)).